Here is a 177-residue protein sequence, read N- to C-terminus: Inorganic pyrophosphatase (177 aa).

Positions 31, 45, and 57 each coordinate substrate. Mg(2+)-binding residues include D67, D72, and D104. Substrate is bound at residue Y141.

The protein belongs to the PPase family. In terms of assembly, homohexamer. It depends on Mg(2+) as a cofactor.

The protein localises to the cytoplasm. It catalyses the reaction diphosphate + H2O = 2 phosphate + H(+). In terms of biological role, catalyzes the hydrolysis of inorganic pyrophosphate (PPi) forming two phosphate ions. The polypeptide is Inorganic pyrophosphatase (Halobacterium salinarum (strain ATCC 700922 / JCM 11081 / NRC-1) (Halobacterium halobium)).